A 416-amino-acid chain; its full sequence is Argininosuccinate synthase (416 aa).

ATP is bound by residues 11–19 and A37; that span reads AYSGGLDTS. Y88 is a binding site for L-citrulline. Phosphotyrosine occurs at positions 88 and 114. Residue 116–124 coordinates ATP; sequence AHGATGKGN. L-aspartate contacts are provided by T120, N124, and D125. Position 124 (N124) interacts with L-citrulline. Residues R128, S181, S190, E271, and Y283 each coordinate L-citrulline. A Phosphoserine modification is found at S181.

This sequence belongs to the argininosuccinate synthase family. As to quaternary structure, homotetramer.

The protein resides in the cytoplasm. Its subcellular location is the cytosol. It catalyses the reaction L-citrulline + L-aspartate + ATP = 2-(N(omega)-L-arginino)succinate + AMP + diphosphate + H(+). It functions in the pathway amino-acid biosynthesis; L-arginine biosynthesis; L-arginine from L-ornithine and carbamoyl phosphate: step 2/3. It participates in nitrogen metabolism; urea cycle; (N(omega)-L-arginino)succinate from L-aspartate and L-citrulline: step 1/1. Functionally, one of the enzymes of the urea cycle, the metabolic pathway transforming neurotoxic amonia produced by protein catabolism into inocuous urea in the liver of ureotelic animals. Catalyzes the formation of arginosuccinate from aspartate, citrulline and ATP and together with ASL it is responsible for the biosynthesis of arginine in most body tissues. The polypeptide is Argininosuccinate synthase (Gallus gallus (Chicken)).